The sequence spans 292 residues: 33 kDa chaperonin (292 aa).

2 cysteine pairs are disulfide-bonded: cysteine 230/cysteine 232 and cysteine 263/cysteine 266.

The protein belongs to the HSP33 family. Post-translationally, under oxidizing conditions two disulfide bonds are formed involving the reactive cysteines. Under reducing conditions zinc is bound to the reactive cysteines and the protein is inactive.

It is found in the cytoplasm. Its function is as follows. Redox regulated molecular chaperone. Protects both thermally unfolding and oxidatively damaged proteins from irreversible aggregation. Plays an important role in the bacterial defense system toward oxidative stress. This chain is 33 kDa chaperonin, found in Escherichia coli O7:K1 (strain IAI39 / ExPEC).